Here is a 132-residue protein sequence, read N- to C-terminus: Small ribosomal subunit protein uS13 (132 aa).

Over residues 101 to 125 the composition is skewed to basic residues; sequence RGLPVRGQRTKTNARTRKGPRKTVA. Residues 101–132 are disordered; sequence RGLPVRGQRTKTNARTRKGPRKTVANKKIETR.

This sequence belongs to the universal ribosomal protein uS13 family. In terms of assembly, part of the 30S ribosomal subunit. Forms a loose heterodimer with protein S19. Forms two bridges to the 50S subunit in the 70S ribosome.

Its function is as follows. Located at the top of the head of the 30S subunit, it contacts several helices of the 16S rRNA. In the 70S ribosome it contacts the 23S rRNA (bridge B1a) and protein L5 of the 50S subunit (bridge B1b), connecting the 2 subunits; these bridges are implicated in subunit movement. Contacts the tRNAs in the A and P-sites. The sequence is that of Small ribosomal subunit protein uS13 from Ureaplasma urealyticum serovar 10 (strain ATCC 33699 / Western).